Reading from the N-terminus, the 263-residue chain is Small ribosomal subunit protein uS2 (263 aa).

The interval 223–246 (KSLLEQDSDANADEAEVSQEEKDA) is disordered. Positions 228 to 240 (QDSDANADEAEVS) are enriched in acidic residues.

Belongs to the universal ribosomal protein uS2 family.

The protein is Small ribosomal subunit protein uS2 of Campylobacter curvus (strain 525.92).